A 425-amino-acid chain; its full sequence is Glutamate-1-semialdehyde 2,1-aminomutase (425 aa).

Lys-264 is subject to N6-(pyridoxal phosphate)lysine.

Belongs to the class-III pyridoxal-phosphate-dependent aminotransferase family. HemL subfamily. In terms of assembly, homodimer. The cofactor is pyridoxal 5'-phosphate.

The protein resides in the cytoplasm. The catalysed reaction is (S)-4-amino-5-oxopentanoate = 5-aminolevulinate. Its pathway is porphyrin-containing compound metabolism; protoporphyrin-IX biosynthesis; 5-aminolevulinate from L-glutamyl-tRNA(Glu): step 2/2. In Leptospira biflexa serovar Patoc (strain Patoc 1 / Ames), this protein is Glutamate-1-semialdehyde 2,1-aminomutase.